The chain runs to 1373 residues: Inactive tyrosine-protein kinase PRAG1 (1373 aa).

Disordered regions lie at residues 31–50 (AGHP…LPAR) and 197–235 (TSSC…DSEG). Position 238 is a phosphotyrosine (Tyr238). Composition is skewed to basic and acidic residues over residues 250–263 (DAVH…RRGG) and 272–284 (QGPR…EEKQ). Positions 250–338 (DAVHSTEGSG…SGASSPFAPH (89 aa)) are disordered. Residues 317 to 333 (SSSDGLSCGSSRSGASS) are compositionally biased toward low complexity. Residues Tyr343 and Tyr391 each carry the phosphotyrosine modification. 2 disordered regions span residues 376–448 (QPAS…NPAP) and 468–794 (IYLS…LPQK). Over residues 419–438 (SQGQVWTGDTWIQKTPPSWS) the composition is skewed to polar residues. The segment covering 506–522 (RESHPHNVTENTAKEKP) has biased composition (basic and acidic residues). A compositionally biased stretch (low complexity) spans 526-538 (PKLSKSSPGGSPV). Polar residues-rich tracts occupy residues 568-578 (NLTSSCHTNGV) and 655-670 (TSGQ…SKSA). Ser671 and Ser720 each carry phosphoserine. 2 stretches are compositionally biased toward polar residues: residues 711 to 721 (VSQSSAESLSP) and 729 to 740 (SFTTGSTDSLAS). Residues Ser757 and Ser802 each carry the phosphoserine modification. Residues 804 to 823 (PDGFFWTQGSPKPRTASPKL) form a disordered region. The tract at residues 911–954 (STQLQLHSLLSSISSKEGTYAKLGGLYTQSLARLVTKCEDLFMG) is required for homodimerization. In terms of domain architecture, Protein kinase spans 945-1296 (VTKCEDLFMG…EAKRVLQCLL (352 aa)). Over residues 1041 to 1050 (LASPDTSSKD) the composition is skewed to polar residues. Disordered stretches follow at residues 1041 to 1062 (LASP…PPAQ) and 1138 to 1171 (QSSP…QGGP). A compositionally biased stretch (low complexity) spans 1139 to 1167 (SSPGPSATPTVPTTTSRCPSAAPAATTAC). The segment at 1298–1373 (GPRRELVEQP…LQSLKLLQLL (76 aa)) is required for homodimerization.

This sequence belongs to the protein kinase superfamily. Homodimer. Dimerization leads to the catalytic activation of CSK. Interacts (via C-terminus) with RND2. Interacts with CSK (via SH2 domain) in a Tyr-391 phosphorylation-dependent manner; this interaction potentiates kinase activity of CSK. Interacts with NOTCH1 intracellular domain (N1ICD). Forms a complex with PRAG1, N1ICD and MAML1, in a MAML1-dependent manner. Phosphorylated by CSK on Tyr-238, Tyr-343, and Tyr-391; Tyr-391 is a primary site of phosphorylation.

The protein resides in the cytoplasm. It localises to the nucleus. Its subcellular location is the cell junction. The protein localises to the focal adhesion. Its function is as follows. Catalytically inactive protein kinase that acts as a scaffold protein. Functions as an effector of the small GTPase RND2, which stimulates RhoA activity and inhibits NGF-induced neurite outgrowth. Promotes Src family kinase (SFK) signaling by regulating the subcellular localization of CSK, a negative regulator of these kinases, leading to the regulation of cell morphology and motility by a CSK-dependent mechanism. Acts as a critical coactivator of Notch signaling. The protein is Inactive tyrosine-protein kinase PRAG1 of Mus musculus (Mouse).